A 152-amino-acid polypeptide reads, in one-letter code: Maintenance of carboxysome distribution protein B (152 aa).

In terms of assembly, self-associates, interacts with McdA probably via the C-terminus of both proteins. Homohexamerizes. Probably a trimer of dimers. Interacts with most of the shell components of the carboxysome (CcmK2, CcmK3, CcmK4, CcmL and CcmO, but not CcmP) via its C-terminus.

Its subcellular location is the carboxysome. Functionally, mcdA and McdB together mediate carboxysome (Cb) spacing, size, ultrastructure and probably inheritance in the cell. Together they prevent Cb aggregation. McdA is an ATPase that forms dynamic gradients on the nucleoid in response to adapter protein McdB, which associates with carboxysomes. The interplay between McdA gradients on the nucleoid and McdB-bound carboxysomes result in the equal spacing of Cbs along the cell length. McdB may have an additional function in cell divison. Stimulates the ATPase activity of McdA, causing McdA to be released from DNA. Overexpression leads to loss of McdA oscillation and formation of large Cb aggregates which colocalize with McdB, as well as diffuse McdB staining in the cytoplasm. Undergoes liquid-liquid phase separation between pH 6.5-7.5 and at concentrations between 1 uM and 167 uM. Forms polar foci upon overexpression in E.coli. Its function is as follows. Incorrect positioning (aggregation) of carboxysomes results in reduced CO(2) fixation by encapsulated RuBisCO, which leads to slower growth, cell elongation, asymmetric cell division and an increase in RuBisCO levels. The chain is Maintenance of carboxysome distribution protein B from Synechococcus elongatus (strain ATCC 33912 / PCC 7942 / FACHB-805) (Anacystis nidulans R2).